We begin with the raw amino-acid sequence, 82 residues long: Immediate early response 3-interacting protein 1 (82 aa).

The next 2 membrane-spanning stretches (helical) occupy residues 2-22 and 62-82; these read AFTLYALIQTAILFTNAIAVL and VMRVPLIAVNSVCIVLLLLFG.

The protein belongs to the YOS1 family.

Its subcellular location is the endoplasmic reticulum membrane. Its function is as follows. Regulator of endoplasmic reticulum secretion that acts as a key determinant of brain size. Required for secretion of extracellular matrix proteins. Required for correct brain development by depositing sufficient extracellular matrix proteins for tissue integrity and the proliferation of neural progenitors. Acts as a regulator of the unfolded protein response (UPR). In Danio rerio (Zebrafish), this protein is Immediate early response 3-interacting protein 1.